We begin with the raw amino-acid sequence, 185 residues long: Ribosome-recycling factor (185 aa).

The segment at 137 to 158 (DELKKLEKDHTASEDEVKRAQD) is disordered.

It belongs to the RRF family.

It is found in the cytoplasm. Responsible for the release of ribosomes from messenger RNA at the termination of protein biosynthesis. May increase the efficiency of translation by recycling ribosomes from one round of translation to another. This chain is Ribosome-recycling factor, found in Desulfitobacterium hafniense (strain Y51).